A 182-amino-acid chain; its full sequence is UPF0397 protein BCQ_2505 (182 aa).

The next 5 helical transmembrane spans lie at 9 to 29, 40 to 60, 71 to 91, 114 to 134, and 142 to 162; these read VVAIGIGAALYGILGLWGFSI, AILTVFGALFGPVAGLLIGLI, WGIWWGWVISSGIIGFAMGFI, ITGLIGIVIAIIFAGAFDIIV, and IVIQVLGATIADVIVFLVLGL.

The protein belongs to the UPF0397 family.

The protein resides in the cell membrane. The protein is UPF0397 protein BCQ_2505 of Bacillus cereus (strain Q1).